Consider the following 130-residue polypeptide: EG45-like domain containing protein 2 (130 aa).

The signal sequence occupies residues 1 to 25 (MIKMAVKFVVVMIVFAQILAPIAEA). One can recognise an Expansin-like EG45 domain in the interval 28-130 (GKAVYYDPPY…GNIRVVYTPI (103 aa)). A glycan (N-linked (GlcNAc...) asparagine) is linked at Asn-106.

In terms of tissue distribution, expressed in unstressed leaves.

It localises to the secreted. Its function is as follows. Plays a systemic role in water and solute homeostasis. In Arabidopsis thaliana (Mouse-ear cress), this protein is EG45-like domain containing protein 2 (EGC2).